We begin with the raw amino-acid sequence, 506 residues long: Dipeptide and tripeptide permease A (506 aa).

The Cytoplasmic segment spans residues 1–36 (MSTANNNSESTESVSMNAFKQPKAFYLIFSIELWER). The chain crosses the membrane as a helical span at residues 37 to 57 (FGYYGLQGIMAVYLVKMLGMS). The Periplasmic portion of the chain corresponds to 58-61 (ETDS). A helical transmembrane segment spans residues 62–82 (ITLFSSFSALVYGFVAIGGWL). The Cytoplasmic portion of the chain corresponds to 83–91 (GDKVLGTKR). Helical transmembrane passes span 92–112 (VIVL…YSGH) and 113–133 (SVAW…LFKA). The Cytoplasmic segment spans residues 134–155 (NPSALLSTCYAKDDPRLDGAFT). Residues 156-176 (MYYMAVNIGSFFSMLATPVLA) traverse the membrane as a helical segment. Residues 177 to 180 (ANYG) lie on the Periplasmic side of the membrane. The helical transmembrane segment at 181-201 (WSVAFSLSVVGMILTLVNFMF) threads the bilayer. Residues 202-222 (CRKWVSTQGSQPDFQPINLKK) lie on the Cytoplasmic side of the membrane. A helical transmembrane segment spans residues 223-243 (LVITLAGIVVLVALSTWLLHN). At 244–248 (QGVAR) the chain is on the periplasmic side. Residues 249 to 269 (WILTIISLAVVAIFIKEMLAV) form a helical membrane-spanning segment. The Cytoplasmic portion of the chain corresponds to 270 to 276 (SGAERRK). Residues 277-297 (MIVALLLMLEAVVFFVLYNQM) traverse the membrane as a helical segment. At 298 to 322 (PTSLNFFAIRNVEHSILGFAFEPEQ) the chain is on the periplasmic side. The chain crosses the membrane as a helical span at residues 323 to 343 (YQALNPFWIMVASPLLAAVYN). Residues 344 to 354 (KMGDQLPMAHK) lie on the Cytoplasmic side of the membrane. Residues 355–375 (FAIGMVLCSGAFLVLPWGASM) form a helical membrane-spanning segment. The Periplasmic portion of the chain corresponds to 376-385 (ANEQGIVSVN). The chain crosses the membrane as a helical span at residues 386–406 (WLILCYGLQSIGELMISGLGL). Residues 407-416 (AMVAQLVPQR) are Cytoplasmic-facing. Residues 417–437 (LMGFIMGAWFLTSAGAAIIAG) form a helical membrane-spanning segment. Over 438–461 (YVANMMAVPENVVDPHVSLEVYSN) the chain is Periplasmic. Residues 462–482 (VFMQIGIVTGIIAVLMMLTAP) traverse the membrane as a helical segment. The Cytoplasmic segment spans residues 483-506 (KLTRMTQDVATDVPADAATTTASA).

This sequence belongs to the major facilitator superfamily. Proton-dependent oligopeptide transporter (POT/PTR) (TC 2.A.17) family. DtpA subfamily.

It is found in the cell inner membrane. Proton-dependent permease that transports di- and tripeptides. The chain is Dipeptide and tripeptide permease A from Pectobacterium carotovorum subsp. carotovorum (strain PC1).